Reading from the N-terminus, the 95-residue chain is Corticostatin-3 (95 aa).

A signal peptide spans 1 to 19; the sequence is MRTLALLAAILLVALQAQA. The propeptide occupies 20-62; it reads EHVSVSIDEVVDQQPPQAEDQDVAIYVKEHESSALEALGVKAG. Intrachain disulfides connect cysteine 65–cysteine 93, cysteine 67–cysteine 82, and cysteine 72–cysteine 92.

This sequence belongs to the alpha-defensin family.

The protein localises to the secreted. This peptide has antibiotic, anti-fungi and antiviral activity. It also inhibits corticotropin (ACTH) stimulated corticosterone production. This Oryctolagus cuniculus (Rabbit) protein is Corticostatin-3.